A 362-amino-acid chain; its full sequence is Cytoskeleton protein RodZ (362 aa).

At Met-1–Gly-111 the chain is on the cytoplasmic side. Residues Leu-19–Leu-79 enclose the HTH cro/C1-type domain. Positions Gln-30–Glu-49 form a DNA-binding region, H-T-H motif. A helical; Signal-anchor for type II membrane protein membrane pass occupies residues Trp-112–Trp-132. Residues Trp-133–Glu-362 lie on the Periplasmic side of the membrane. Positions Ser-151–Gly-277 are disordered. The segment covering Ser-193–Thr-221 has biased composition (low complexity). A compositionally biased stretch (polar residues) spans Val-223–His-242. Low complexity predominate over residues Ala-246 to Pro-259.

Belongs to the RodZ family.

It is found in the cell inner membrane. In terms of biological role, cytoskeletal protein that is involved in cell-shape control through regulation of the length of the long axis. The protein is Cytoskeleton protein RodZ of Yersinia pseudotuberculosis serotype IB (strain PB1/+).